The following is a 1394-amino-acid chain: DNA-directed RNA polymerase subunit beta' (1394 aa).

Residues Cys70, Cys72, Cys85, and Cys88 each contribute to the Zn(2+) site. Mg(2+)-binding residues include Asp470, Asp472, and Asp474. Residues Cys815, Cys889, Cys896, and Cys899 each contribute to the Zn(2+) site.

This sequence belongs to the RNA polymerase beta' chain family. As to quaternary structure, the RNAP catalytic core consists of 2 alpha, 1 beta, 1 beta' and 1 omega subunit. When a sigma factor is associated with the core the holoenzyme is formed, which can initiate transcription. It depends on Mg(2+) as a cofactor. Zn(2+) serves as cofactor.

The catalysed reaction is RNA(n) + a ribonucleoside 5'-triphosphate = RNA(n+1) + diphosphate. Functionally, DNA-dependent RNA polymerase catalyzes the transcription of DNA into RNA using the four ribonucleoside triphosphates as substrates. This chain is DNA-directed RNA polymerase subunit beta', found in Anaeromyxobacter dehalogenans (strain 2CP-C).